The following is a 235-amino-acid chain: Transcriptional regulatory protein WalR (235 aa).

The Response regulatory domain occupies 4-117 (KILVVDDEKP…ELLARVKANL (114 aa)). D53 carries the 4-aspartylphosphate modification. Positions 132-231 (SNEIHIGSLV…RRGVGYYLRN (100 aa)) form a DNA-binding region, ompR/PhoB-type.

As to quaternary structure, homodimer. Post-translationally, phosphorylated by WalK.

The protein localises to the cytoplasm. Member of the two-component regulatory system WalK/WalR involved in the regulation of the ftsAZ operon, the yocH, ykvT, cwlO, lytE, ydjM, yjeA, yoeB genes and the tagAB and tagDEF operons. Binds to the ftsAZ P1 promoter sequence in vitro. WalR has been shown to directly bind to the regulatory regions of yocH, ykvT, tagAB/tagDEF. Activates cwlO, lytE and ydjM and represses yoeB and yjeA. The polypeptide is Transcriptional regulatory protein WalR (Bacillus subtilis (strain 168)).